The primary structure comprises 217 residues: tRNA (guanine-N(7)-)-methyltransferase (217 aa).

S-adenosyl-L-methionine contacts are provided by E48, E73, N100, and D123. The active site involves D123. Substrate is bound by residues K127 and D159.

Belongs to the class I-like SAM-binding methyltransferase superfamily. TrmB family.

It catalyses the reaction guanosine(46) in tRNA + S-adenosyl-L-methionine = N(7)-methylguanosine(46) in tRNA + S-adenosyl-L-homocysteine. It participates in tRNA modification; N(7)-methylguanine-tRNA biosynthesis. Functionally, catalyzes the formation of N(7)-methylguanine at position 46 (m7G46) in tRNA. In Leptospira borgpetersenii serovar Hardjo-bovis (strain JB197), this protein is tRNA (guanine-N(7)-)-methyltransferase.